The following is a 230-amino-acid chain: Orotidine 5'-phosphate decarboxylase (230 aa).

Substrate is bound by residues Asp-10, Lys-32, 59–68 (DLKYHDIPNT), Thr-119, Arg-180, Gln-189, Gly-209, and Arg-210. The Proton donor role is filled by Lys-61.

Belongs to the OMP decarboxylase family. Type 1 subfamily. In terms of assembly, homodimer.

The catalysed reaction is orotidine 5'-phosphate + H(+) = UMP + CO2. The protein operates within pyrimidine metabolism; UMP biosynthesis via de novo pathway; UMP from orotate: step 2/2. Catalyzes the decarboxylation of orotidine 5'-monophosphate (OMP) to uridine 5'-monophosphate (UMP). This chain is Orotidine 5'-phosphate decarboxylase, found in Actinobacillus pleuropneumoniae serotype 5b (strain L20).